The sequence spans 341 residues: tRNA N6-adenosine threonylcarbamoyltransferase (341 aa).

Histidine 111 and histidine 115 together coordinate Fe cation. Substrate contacts are provided by residues 134 to 138 (LVSGG), aspartate 167, glycine 180, and asparagine 276. Aspartate 304 serves as a coordination point for Fe cation.

Belongs to the KAE1 / TsaD family. Fe(2+) is required as a cofactor.

Its subcellular location is the cytoplasm. The catalysed reaction is L-threonylcarbamoyladenylate + adenosine(37) in tRNA = N(6)-L-threonylcarbamoyladenosine(37) in tRNA + AMP + H(+). In terms of biological role, required for the formation of a threonylcarbamoyl group on adenosine at position 37 (t(6)A37) in tRNAs that read codons beginning with adenine. Is involved in the transfer of the threonylcarbamoyl moiety of threonylcarbamoyl-AMP (TC-AMP) to the N6 group of A37, together with TsaE and TsaB. TsaD likely plays a direct catalytic role in this reaction. This Pseudomonas fluorescens (strain ATCC BAA-477 / NRRL B-23932 / Pf-5) protein is tRNA N6-adenosine threonylcarbamoyltransferase.